A 349-amino-acid polypeptide reads, in one-letter code: NADH-quinone oxidoreductase subunit H (349 aa).

A run of 8 helical transmembrane segments spans residues 14–34, 85–105, 120–140, 164–184, 196–216, 243–263, 285–305, and 324–344; these read LLVWTLLKIIAIVLPMLGCVA, GLFLLAPVLSIGPALAAWAVI, LLYILALTSMGVYGVIIAGWA, MGFALVGVLMVSGSLNLVDIV, ILSWNWIPLFPLFIVYLISGV, GMAFAIFFLAEYANMILVAAL, AGGFFWLAVKMALVLFCFLWF, and VFIPVTLVWILVVGAWMFSPL.

It belongs to the complex I subunit 1 family. In terms of assembly, NDH-1 is composed of 14 different subunits. Subunits NuoA, H, J, K, L, M, N constitute the membrane sector of the complex.

It localises to the cell inner membrane. The enzyme catalyses a quinone + NADH + 5 H(+)(in) = a quinol + NAD(+) + 4 H(+)(out). Its function is as follows. NDH-1 shuttles electrons from NADH, via FMN and iron-sulfur (Fe-S) centers, to quinones in the respiratory chain. The immediate electron acceptor for the enzyme in this species is believed to be ubiquinone. Couples the redox reaction to proton translocation (for every two electrons transferred, four hydrogen ions are translocated across the cytoplasmic membrane), and thus conserves the redox energy in a proton gradient. This subunit may bind ubiquinone. This is NADH-quinone oxidoreductase subunit H from Chromobacterium violaceum (strain ATCC 12472 / DSM 30191 / JCM 1249 / CCUG 213 / NBRC 12614 / NCIMB 9131 / NCTC 9757 / MK).